The sequence spans 285 residues: Glycine--tRNA ligase alpha subunit (285 aa).

Belongs to the class-II aminoacyl-tRNA synthetase family. Tetramer of two alpha and two beta subunits.

The protein resides in the cytoplasm. The catalysed reaction is tRNA(Gly) + glycine + ATP = glycyl-tRNA(Gly) + AMP + diphosphate. The polypeptide is Glycine--tRNA ligase alpha subunit (Thermodesulfovibrio yellowstonii (strain ATCC 51303 / DSM 11347 / YP87)).